The following is an 878-amino-acid chain: MPTVHNSEYIKELLVDNTSYKIYDINKAASDIGISLNKLPYSLRVLLENVLRTSGNKENLLVFKEWLKTKKSNTEIDFMPARVLMQDFTGVPAIVDLAAMRDAMQKIGCNPLKINPLIPVDLVIDHSVSVDSYGLKESFEQNVQMEMKRNIERYQFLKWGQQAFNNFKVVPPGTGICHQVNLEYLSKVVWYNDGTAYPDSLVGTDSHTTMVNGLSVLGWGVGGIEAEAAMLGQPLTMIIPEVIGVKLTGKLEGMATATDLVLTITEMLRRTKVVGKFVEFFGYGLSNLTISDRATISNMSPEYGATCGFFPIDQETIKYLEITGRETRQIKLVEKYATEQNLWYNFEDTQEYTEVLELDLSTVYSSLAGPKRPQDRVNLSFVESNFKNELPYFALENQDIDKKYAVANQNYEIGNGDVVIAAITSCTNTSNPSVMIGAALLAKKALEHGLNVKPWVKTSLAPGSKVVTEYLKISGLDKYLDALGFNLVGYGCTTCIGNSGSLNPEIENTINKNRLVVASVLSGNRNFEGRINPLTKASYLASPILVVAYALSGTLNIDLTTTPIGANIYLKDIWPSQKEIDAVIANSINPSMFIEKYADVFNGTKEWHDLHITTGTNYNWDKNSTYINNPPYFDNICSENTIKDIKSAKILAIFGDSITTDHISPAGSISKNSPAAKYLIEHNIEPLNFNSYGSRRGNHEVMMRGTFANIRIKNEMCNGVEGGFTINQLSGVQQTIYDAAMDYQAHDIPLVVFAGKEYGSGSSRDWAAKGPGLLGIKAIIAESFERIHRSNLVGMGILPLTFTGNNTRLSLKLDGSETIDIIGLSKNIRPFNLVKCVIKKQTNEISTIDLILQIFTENEINYIKHGSIMQFVVESLKG.

[4Fe-4S] cluster contacts are provided by Cys426, Cys492, and Cys495.

This sequence belongs to the aconitase/IPM isomerase family. In terms of assembly, monomer. The cofactor is [4Fe-4S] cluster.

It catalyses the reaction citrate = D-threo-isocitrate. The enzyme catalyses (2S,3R)-3-hydroxybutane-1,2,3-tricarboxylate = 2-methyl-cis-aconitate + H2O. Its pathway is carbohydrate metabolism; tricarboxylic acid cycle; isocitrate from oxaloacetate: step 2/2. It participates in organic acid metabolism; propanoate degradation. Its function is as follows. Involved in the catabolism of short chain fatty acids (SCFA) via the tricarboxylic acid (TCA)(acetyl degradation route) and probably the 2-methylcitrate cycle I (propionate degradation route). Catalyzes the reversible isomerization of citrate to isocitrate via cis-aconitate. Could catalyze the hydration of 2-methyl-cis-aconitate to yield (2R,3S)-2-methylisocitrate. The apo form of AcnA functions as a RNA-binding regulatory protein. This chain is Aconitate hydratase A (acnA), found in Rickettsia typhi (strain ATCC VR-144 / Wilmington).